Consider the following 235-residue polypeptide: Probable queuosine precursor transporter (235 aa).

6 consecutive transmembrane segments (helical) span residues 17-37 (IIWL…FVQI), 56-76 (FHST…DLTV), 87-107 (IIFV…VLFS), 127-147 (IAIA…IVFN), 155-175 (WWVA…FVFF), and 201-221 (FKLF…LNVI).

Belongs to the vitamin uptake transporter (VUT/ECF) (TC 2.A.88) family. Q precursor transporter subfamily.

The protein resides in the cell inner membrane. Involved in the import of queuosine (Q) precursors, required for Q precursor salvage. The chain is Probable queuosine precursor transporter from Haemophilus influenzae (strain ATCC 51907 / DSM 11121 / KW20 / Rd).